The primary structure comprises 333 residues: UbiA prenyltransferase domain-containing protein 1 (333 aa).

Residues 13–33 (NAESPRGGERNDCGAGAERGP) form a disordered region. The next 8 helical transmembrane spans lie at 78 to 98 (LLVGSAVAVLAVHGAGNLVNT), 129 to 149 (FGVFLYTVGCICAAGLYAVST), 155 to 175 (LALVYFGGLSSSFLYTGGIGF), 177 to 197 (YVALGDVVILITFGPLAVMFA), 199 to 219 (AVQVGYLSVSPLLYAVPLALS), 240 to 260 (IVTLAIIIGPAFSYVLYTVLL), 265 to 285 (LIFCVLATRYTISMALPLLTI), and 310 to 330 (LNLLLGLFYVFGIMLAPAGAL).

Belongs to the UbiA prenyltransferase family.

It localises to the endoplasmic reticulum membrane. The protein resides in the golgi apparatus membrane. The protein localises to the mitochondrion membrane. It catalyses the reaction menadiol + (2E,6E,10E)-geranylgeranyl diphosphate = menaquinol-4 + diphosphate. It carries out the reaction all-trans-decaprenyl diphosphate + 4-hydroxybenzoate = 4-hydroxy-3-(all-trans-decaprenyl)benzoate + diphosphate. The protein operates within quinol/quinone metabolism; menaquinone biosynthesis. Its pathway is cofactor biosynthesis; ubiquinone biosynthesis. Prenyltransferase that mediates the formation of menaquinone-4 (MK-4) and coenzyme Q10. MK-4 is a vitamin K2 isoform required for endothelial cell development. Mediates the conversion of phylloquinone (PK) into MK-4, probably by cleaving the side chain of phylloquinone (PK) to release 2-methyl-1,4-naphthoquinone (menadione; K3) and then prenylating it with geranylgeranyl pyrophosphate (GGPP) to form MK-4. Also plays a role in cardiovascular development independently of MK-4 biosynthesis, by acting as a coenzyme Q10 biosynthetic enzyme: coenzyme Q10, also named ubiquinone, plays an important antioxidant role in the cardiovascular system. Mediates biosynthesis of coenzyme Q10 in the Golgi membrane, leading to protect cardiovascular tissues from NOS3/eNOS-dependent oxidative stress. This is UbiA prenyltransferase domain-containing protein 1 (UBIAD1) from Gallus gallus (Chicken).